A 200-amino-acid polypeptide reads, in one-letter code: Small ribosomal subunit protein uS4 (200 aa).

Residues 22–42 are disordered; the sequence is TGKELEKRPYAPGPHGPNQRK. Residues 92–152 form the S4 RNA-binding domain; it reads ARLDNLVYRM…EKSNSLVVVK (61 aa).

This sequence belongs to the universal ribosomal protein uS4 family. In terms of assembly, part of the 30S ribosomal subunit. Contacts protein S5. The interaction surface between S4 and S5 is involved in control of translational fidelity.

In terms of biological role, one of the primary rRNA binding proteins, it binds directly to 16S rRNA where it nucleates assembly of the body of the 30S subunit. With S5 and S12 plays an important role in translational accuracy. The polypeptide is Small ribosomal subunit protein uS4 (Bacillus mycoides (strain KBAB4) (Bacillus weihenstephanensis)).